Consider the following 302-residue polypeptide: Nudix hydrolase 5 (302 aa).

A Nudix hydrolase domain is found at 122 to 254 (SHRIGIGAFV…EGNEMFKLIA (133 aa)). The Nudix box motif lies at 159-180 (GTIKEGESIWAGAVREVKEETD). Mg(2+) contacts are provided by E174 and E178.

It belongs to the Nudix hydrolase family. Requires Mg(2+) as cofactor. The cofactor is Mn(2+). As to expression, expressed in roots, stems and leaves.

Functionally, probably mediates the hydrolysis of some nucleoside diphosphate derivatives. This chain is Nudix hydrolase 5 (NUDT5), found in Arabidopsis thaliana (Mouse-ear cress).